Reading from the N-terminus, the 785-residue chain is Endonuclease MutS2 (785 aa).

332–339 (GPNTGGKT) is an ATP binding site. A Smr domain is found at 710-785 (IDLRGLDAEE…GDGATIVELK (76 aa)).

Belongs to the DNA mismatch repair MutS family. MutS2 subfamily. As to quaternary structure, homodimer. Binds to stalled ribosomes, contacting rRNA.

In terms of biological role, endonuclease that is involved in the suppression of homologous recombination and thus may have a key role in the control of bacterial genetic diversity. Its function is as follows. Acts as a ribosome collision sensor, splitting the ribosome into its 2 subunits. Detects stalled/collided 70S ribosomes which it binds and splits by an ATP-hydrolysis driven conformational change. Acts upstream of the ribosome quality control system (RQC), a ribosome-associated complex that mediates the extraction of incompletely synthesized nascent chains from stalled ribosomes and their subsequent degradation. Probably generates substrates for RQC. The protein is Endonuclease MutS2 of Clostridium botulinum (strain Alaska E43 / Type E3).